A 1444-amino-acid polypeptide reads, in one-letter code: Bromodomain-containing protein 4 (1444 aa).

Disordered stretches follow at residues 1 to 44, 154 to 217, 279 to 362, 492 to 523, 540 to 645, 722 to 986, and 1020 to 1422; these read MGDG…PKRQ, VEIS…PQPI, AAPP…KQQE, PVMA…ERAQ, AALS…GGAA, CLRK…SSQP, and TSLM…RREA. Residues 11–27 are compositionally biased toward low complexity; that stretch reads SGSSSSQGQPSSQAPSS. Positions 43-149 constitute a Bromo 1 domain; that stretch reads RQTNQLQYLL…KVFLTKISEM (107 aa). Residues 186-196 are compositionally biased toward polar residues; sequence ASPQTRGLSNL. Pro residues predominate over residues 206-216; sequence PQGPPTLPPQP. Positions 303–319 are enriched in polar residues; it reads TTTPTANDQLNESSPAE. The span at 327–347 shows a compositional bias: basic and acidic residues; that stretch reads PRRDNTRPSKLPKKEAPDSQH. The Bromo 2 domain maps to 358–467; it reads PKQQEQLRYC…DVFEMRFAKM (110 aa). The segment covering 498 to 511 has biased composition (low complexity); that stretch reads SSSDTSSDSSSESE. Positions 498-517 are NPS region; sequence SSSDTSSDSSSESESSTDDS. The tract at residues 538–610 is BID region; the sequence is QLAALSQPQA…SKKLSKKEGG (73 aa). Positions 549 to 569 are enriched in basic residues; sequence KPKKKEKEKKEKKKDKHKKKA. Positions 633–730 constitute an NET domain; it reads DTEEDLGLTG…SCLRKKKKPA (98 aa). Composition is skewed to low complexity over residues 746–760, 800–823, 919–954, and 1036–1046; these read GTSS…SSSS, LQPQ…HPSP, LQQS…QQQH, and PSLLQSVQVQS. A compositionally biased stretch (polar residues) spans 1090 to 1109; it reads PLQTAQTQPGQHKVSMPSTK. Residues 1110–1121 show a composition bias toward low complexity; the sequence is AQQIIQQQQATQ. The C-terminal (CTD) region stretch occupies residues 1126–1444; that stretch reads RQHKADSYNS…LMAIFEENLF (319 aa). Polar residues predominate over residues 1151 to 1163; sequence QIPQYSLVHQSPS. Basic and acidic residues predominate over residues 1246 to 1255; sequence QDKEKFKQEP. Residues 1282–1296 are compositionally biased toward low complexity; it reads SSTTPSSGLKSSSDS. Positions 1298–1357 are enriched in basic and acidic residues; it reads EQFRRAAREKEEREKALKAQVEQAEKDRLRKEQEKLRGRDEEDSIEPPRRPLEEPRRRQE. The segment covering 1367–1389 has biased composition (low complexity); the sequence is QHQTQAQAQTLNPAQSPSASQPT. A compositionally biased stretch (basic and acidic residues) spans 1405-1422; sequence QQREMARRREQERRRREA.

The protein belongs to the BET family. As to expression, widely expressed.

The protein localises to the nucleus. The protein resides in the chromosome. In terms of biological role, chromatin reader protein that recognizes and binds acetylated histones and plays a key role in transmission of epigenetic memory across cell divisions and transcription regulation. Remains associated with acetylated chromatin throughout the entire cell cycle and provides epigenetic memory for postmitotic G1 gene transcription by preserving acetylated chromatin status and maintaining high-order chromatin structure. During interphase, plays a key role in regulating the transcription of signal-inducible genes by associating with the P-TEFb complex and recruiting it to promoters. This chain is Bromodomain-containing protein 4 (brd4), found in Danio rerio (Zebrafish).